The chain runs to 675 residues: Putative methyl-accepting chemotaxis AlkN (675 aa).

2 helical membrane-spanning segments follow: residues 24–44 (IALY…FLLS) and 303–323 (FPSV…FFII). One can recognise an HAMP domain in the interval 343 to 394 (QRNQAAILRLLDELGDLADGDLTVQATVTEDFTGAIADSINYSIDQLRNLVQ). Positions 399-635 (SAVQVASAAQ…HISNTMNVIQ (237 aa)) constitute a Methyl-accepting transducer domain.

Belongs to the methyl-accepting chemotaxis (MCP) protein family.

It is found in the membrane. It participates in hydrocarbon metabolism; alkane degradation. In terms of biological role, chemotactic-signal transducers respond to changes in the concentration of attractants and repellents in the environment, transduce a signal from the outside to the inside of the cell, and facilitate sensory adaptation through the variation of the level of methylation. In Alcanivorax borkumensis (strain ATCC 700651 / DSM 11573 / NCIMB 13689 / SK2), this protein is Putative methyl-accepting chemotaxis AlkN.